The following is a 75-amino-acid chain: U6-lycotoxin-Ls1b (75 aa).

Residues Met1–Ala21 form the signal peptide. A propeptide spanning residues Glu22 to Arg25 is cleaved from the precursor.

It belongs to the neurotoxin 19 (CSTX) family. 06 (U6-Lctx) subfamily. In terms of processing, contains 4 disulfide bonds. Expressed by the venom gland.

The protein localises to the secreted. This is U6-lycotoxin-Ls1b from Lycosa singoriensis (Wolf spider).